We begin with the raw amino-acid sequence, 452 residues long: Flavin-containing monooxygenase FMO GS-OX-like 4 (452 aa).

17-22 (GAGAAG) provides a ligand contact to FAD. 217–222 (GNSASA) serves as a coordination point for NADP(+).

The protein belongs to the FMO family. The cofactor is FAD.

Catalyzes the conversion of methylthioalkyl glucosinolates of any chain length into methylsulfinylalkyl glucosinolates. This Arabidopsis thaliana (Mouse-ear cress) protein is Flavin-containing monooxygenase FMO GS-OX-like 4.